The primary structure comprises 403 residues: S-adenosylmethionine synthase (403 aa).

Residue His-15 participates in ATP binding. Asp-17 provides a ligand contact to Mg(2+). Glu-43 serves as a coordination point for K(+). Glu-56 and Gln-99 together coordinate L-methionine. Residues 99–109 (QSPDINQGVDR) form a flexible loop region. ATP is bound by residues 166–168 (DAK), 232–233 (KF), Asp-241, 247–248 (RK), Ala-264, and Lys-268. Position 241 (Asp-241) interacts with L-methionine. Lys-272 contributes to the L-methionine binding site.

This sequence belongs to the AdoMet synthase family. Homotetramer; dimer of dimers. Requires Mg(2+) as cofactor. K(+) is required as a cofactor.

The protein resides in the cytoplasm. The enzyme catalyses L-methionine + ATP + H2O = S-adenosyl-L-methionine + phosphate + diphosphate. Its pathway is amino-acid biosynthesis; S-adenosyl-L-methionine biosynthesis; S-adenosyl-L-methionine from L-methionine: step 1/1. Functionally, catalyzes the formation of S-adenosylmethionine (AdoMet) from methionine and ATP. The overall synthetic reaction is composed of two sequential steps, AdoMet formation and the subsequent tripolyphosphate hydrolysis which occurs prior to release of AdoMet from the enzyme. This Xanthomonas axonopodis pv. citri (strain 306) protein is S-adenosylmethionine synthase.